A 135-amino-acid chain; its full sequence is ATP synthase epsilon chain (135 aa).

The protein belongs to the ATPase epsilon chain family. In terms of assembly, F-type ATPases have 2 components, CF(1) - the catalytic core - and CF(0) - the membrane proton channel. CF(1) has five subunits: alpha(3), beta(3), gamma(1), delta(1), epsilon(1). CF(0) has three main subunits: a, b and c.

The protein localises to the cell inner membrane. Produces ATP from ADP in the presence of a proton gradient across the membrane. The protein is ATP synthase epsilon chain of Desulforapulum autotrophicum (strain ATCC 43914 / DSM 3382 / VKM B-1955 / HRM2) (Desulfobacterium autotrophicum).